The primary structure comprises 345 residues: D-fructose 1,6-bisphosphatase class 2/sedoheptulose 1,7-bisphosphatase (345 aa).

Asp33, Glu57, Asp97, and Glu100 together coordinate Mn(2+). Residues Glu100–Thr102, Tyr131, Arg176–Arg178, and Asp198–Asp200 each bind substrate. Glu225 lines the Mn(2+) pocket.

It belongs to the FBPase class 2 family. Homotetramer. Mn(2+) is required as a cofactor.

It catalyses the reaction beta-D-fructose 1,6-bisphosphate + H2O = beta-D-fructose 6-phosphate + phosphate. The catalysed reaction is D-sedoheptulose 1,7-bisphosphate + H2O = D-sedoheptulose 7-phosphate + phosphate. It participates in carbohydrate biosynthesis; Calvin cycle. Its function is as follows. Catalyzes the hydrolysis of fructose 1,6-bisphosphate (Fru 1,6-P2) and sedoheptulose 1,7-bisphosphate (Sed 1,7-P2) to fructose 6-phosphate and sedoheptulose 7-phosphate, respectively. This Crocosphaera subtropica (strain ATCC 51142 / BH68) (Cyanothece sp. (strain ATCC 51142)) protein is D-fructose 1,6-bisphosphatase class 2/sedoheptulose 1,7-bisphosphatase.